We begin with the raw amino-acid sequence, 226 residues long: Thaumatin-like protein (226 aa).

Residues 1–24 form the signal peptide; sequence MNFSKNLPLLVSLWAITFFAYTHA. 8 cysteine pairs are disulfide-bonded: Cys33-Cys225, Cys74-Cys84, Cys89-Cys95, Cys140-Cys214, Cys145-Cys197, Cys153-Cys163, Cys167-Cys176, and Cys177-Cys184.

This sequence belongs to the thaumatin family. In terms of tissue distribution, expressed in fruits.

Its subcellular location is the secreted. 3D-structure modeling suggests it may have endo-(1,3)-beta-glucanase activity. This is Thaumatin-like protein from Olea europaea (Common olive).